Here is a 144-residue protein sequence, read N- to C-terminus: Putative pre-16S rRNA nuclease (144 aa).

This sequence belongs to the YqgF nuclease family.

The protein localises to the cytoplasm. Its function is as follows. Could be a nuclease involved in processing of the 5'-end of pre-16S rRNA. This chain is Putative pre-16S rRNA nuclease, found in Acaryochloris marina (strain MBIC 11017).